A 345-amino-acid polypeptide reads, in one-letter code: Phosphate acyltransferase (345 aa).

It belongs to the PlsX family. Homodimer. Probably interacts with PlsY.

The protein resides in the cytoplasm. It catalyses the reaction a fatty acyl-[ACP] + phosphate = an acyl phosphate + holo-[ACP]. Its pathway is lipid metabolism; phospholipid metabolism. In terms of biological role, catalyzes the reversible formation of acyl-phosphate (acyl-PO(4)) from acyl-[acyl-carrier-protein] (acyl-ACP). This enzyme utilizes acyl-ACP as fatty acyl donor, but not acyl-CoA. In Trichlorobacter lovleyi (strain ATCC BAA-1151 / DSM 17278 / SZ) (Geobacter lovleyi), this protein is Phosphate acyltransferase.